The chain runs to 109 residues: Staphostatin B (109 aa).

A binds to staphopain B region spans residues 97–101 (IGTSR).

This sequence belongs to the protease inhibitor I57 (SspC) family. In terms of assembly, forms a stable non-covalent complex with prematurely activated/folded SspB.

The protein resides in the cytoplasm. Its function is as follows. Specifically inhibits the cysteine protease staphopain B (SspB) by blocking the active site of the enzyme. Probably required to protect cytoplasmic proteins from being degraded by prematurely activated/folded prostaphopain B. Also involved in growth capacity, viability and bacterial morphology. In Staphylococcus aureus (strain NCTC 8325 / PS 47), this protein is Staphostatin B (sspC).